The primary structure comprises 482 residues: Cysteine--tRNA ligase (482 aa).

Cysteine 28 provides a ligand contact to Zn(2+). The 'HIGH' region motif lies at 30 to 40 (PTVYNFLHVGN). 3 residues coordinate Zn(2+): cysteine 208, histidine 233, and glutamate 237. The 'KMSKS' region signature appears at 265-269 (KMSKS). Lysine 268 contributes to the ATP binding site.

It belongs to the class-I aminoacyl-tRNA synthetase family. In terms of assembly, monomer. The cofactor is Zn(2+).

The protein localises to the cytoplasm. The enzyme catalyses tRNA(Cys) + L-cysteine + ATP = L-cysteinyl-tRNA(Cys) + AMP + diphosphate. The chain is Cysteine--tRNA ligase from Bdellovibrio bacteriovorus (strain ATCC 15356 / DSM 50701 / NCIMB 9529 / HD100).